A 119-amino-acid polypeptide reads, in one-letter code: Ribonuclease P protein component (119 aa).

The protein belongs to the RnpA family. As to quaternary structure, consists of a catalytic RNA component (M1 or rnpB) and a protein subunit.

The enzyme catalyses Endonucleolytic cleavage of RNA, removing 5'-extranucleotides from tRNA precursor.. Functionally, RNaseP catalyzes the removal of the 5'-leader sequence from pre-tRNA to produce the mature 5'-terminus. It can also cleave other RNA substrates such as 4.5S RNA. The protein component plays an auxiliary but essential role in vivo by binding to the 5'-leader sequence and broadening the substrate specificity of the ribozyme. The polypeptide is Ribonuclease P protein component (Photorhabdus laumondii subsp. laumondii (strain DSM 15139 / CIP 105565 / TT01) (Photorhabdus luminescens subsp. laumondii)).